Here is a 112-residue protein sequence, read N- to C-terminus: CENP-A recruiting complex protein mis19 (112 aa).

Component of the CENP-A recruiting complex composed of at least mis16, mis19, mis19 and mis20.

The protein resides in the chromosome. The protein localises to the centromere. It localises to the kinetochore. Functionally, component of the CENP-A recruiting complex that ensures the integrity of mitotic spindles through maintenance of kinetochore factors mis6/CENP-I and cnp1/CENP-A. Links mis16 and mis18 to recruit CENP-A through interacting with non-sense-mediated mRNA decay (NMD) factors and the SWI/SNF complex. Also links mis18 with the CCAN/mis6/ctf19 complex to promote CENP-A assembly. The sequence is that of CENP-A recruiting complex protein mis19 from Schizosaccharomyces pombe (strain 972 / ATCC 24843) (Fission yeast).